The sequence spans 131 residues: Large-conductance mechanosensitive channel (131 aa).

Transmembrane regions (helical) follow at residues 14–34 (VMDM…VTSL) and 71–91 (GNFI…FLLV).

The protein belongs to the MscL family. Homopentamer.

The protein localises to the cell inner membrane. Functionally, channel that opens in response to stretch forces in the membrane lipid bilayer. May participate in the regulation of osmotic pressure changes within the cell. This Dinoroseobacter shibae (strain DSM 16493 / NCIMB 14021 / DFL 12) protein is Large-conductance mechanosensitive channel.